We begin with the raw amino-acid sequence, 63 residues long: Cytochrome c oxidase subunit 5A, mitochondrial (63 aa).

This sequence belongs to the cytochrome c oxidase subunit 5A family. In terms of assembly, component of the cytochrome c oxidase (complex IV, CIV), a multisubunit enzyme composed of a catalytic core of 3 subunits and several supernumerary subunits. The complex exists as a monomer or a dimer and forms supercomplexes (SCs) in the inner mitochondrial membrane with ubiquinol-cytochrome c oxidoreductase (cytochrome b-c1 complex, complex III, CIII).

It localises to the mitochondrion inner membrane. Its pathway is energy metabolism; oxidative phosphorylation. Its function is as follows. Component of the cytochrome c oxidase, the last enzyme in the mitochondrial electron transport chain which drives oxidative phosphorylation. The respiratory chain contains 3 multisubunit complexes succinate dehydrogenase (complex II, CII), ubiquinol-cytochrome c oxidoreductase (cytochrome b-c1 complex, complex III, CIII) and cytochrome c oxidase (complex IV, CIV), that cooperate to transfer electrons derived from NADH and succinate to molecular oxygen, creating an electrochemical gradient over the inner membrane that drives transmembrane transport and the ATP synthase. Cytochrome c oxidase is the component of the respiratory chain that catalyzes the reduction of oxygen to water. Electrons originating from reduced cytochrome c in the intermembrane space (IMS) are transferred via the dinuclear copper A center (CU(A)) of subunit 2 and heme A of subunit 1 to the active site in subunit 1, a binuclear center (BNC) formed by heme A3 and copper B (CU(B)). The BNC reduces molecular oxygen to 2 water molecules using 4 electrons from cytochrome c in the IMS and 4 protons from the mitochondrial matrix. The polypeptide is Cytochrome c oxidase subunit 5A, mitochondrial (COVA) (Manduca sexta (Tobacco hawkmoth)).